A 596-amino-acid chain; its full sequence is Arginine--tRNA ligase (596 aa).

Residues 127–137 carry the 'HIGH' region motif; that stretch reads ANPTGPVHVGR.

This sequence belongs to the class-I aminoacyl-tRNA synthetase family.

The protein resides in the cytoplasm. The catalysed reaction is tRNA(Arg) + L-arginine + ATP = L-arginyl-tRNA(Arg) + AMP + diphosphate. This is Arginine--tRNA ligase from Haloquadratum walsbyi (strain DSM 16790 / HBSQ001).